We begin with the raw amino-acid sequence, 119 residues long: Holo-[acyl-carrier-protein] synthase (119 aa).

Mg(2+) contacts are provided by D8 and E50.

This sequence belongs to the P-Pant transferase superfamily. AcpS family. It depends on Mg(2+) as a cofactor.

Its subcellular location is the cytoplasm. It carries out the reaction apo-[ACP] + CoA = holo-[ACP] + adenosine 3',5'-bisphosphate + H(+). In terms of biological role, transfers the 4'-phosphopantetheine moiety from coenzyme A to a Ser of acyl-carrier-protein. In Clavibacter michiganensis subsp. michiganensis (strain NCPPB 382), this protein is Holo-[acyl-carrier-protein] synthase.